The primary structure comprises 126 residues: Protein Wnt-7(II) (126 aa).

A lipid anchor (O-palmitoleoyl serine; by PORCN) is attached at Ser1. The cysteines at positions 92 and 107 are disulfide-linked. An N-linked (GlcNAc...) asparagine glycan is attached at Asn93.

It belongs to the Wnt family. Post-translationally, palmitoleoylation is required for efficient binding to frizzled receptors. Depalmitoleoylation leads to Wnt signaling pathway inhibition.

It localises to the secreted. It is found in the extracellular space. The protein resides in the extracellular matrix. In terms of biological role, ligand for members of the frizzled family of seven transmembrane receptors. Probable developmental protein. May be a signaling molecule which affects the development of discrete regions of tissues. Is likely to signal over only few cell diameters. The polypeptide is Protein Wnt-7(II) (WNT-7(II)) (Eptatretus stoutii (Pacific hagfish)).